Reading from the N-terminus, the 45-residue chain is Cytochrome b559 subunit beta (45 aa).

A helical membrane pass occupies residues 20-36 (WIAVHTLAVPTVFFLGA). His-24 contributes to the heme binding site.

The protein belongs to the PsbE/PsbF family. Heterodimer of an alpha subunit and a beta subunit. PSII is composed of 1 copy each of membrane proteins PsbA, PsbB, PsbC, PsbD, PsbE, PsbF, PsbH, PsbI, PsbJ, PsbK, PsbL, PsbM, PsbT, PsbX, PsbY, PsbZ, Psb30/Ycf12, peripheral proteins PsbO, CyanoQ (PsbQ), PsbU, PsbV and a large number of cofactors. It forms dimeric complexes. Heme b serves as cofactor.

The protein resides in the cellular thylakoid membrane. Functionally, this b-type cytochrome is tightly associated with the reaction center of photosystem II (PSII). PSII is a light-driven water:plastoquinone oxidoreductase that uses light energy to abstract electrons from H(2)O, generating O(2) and a proton gradient subsequently used for ATP formation. It consists of a core antenna complex that captures photons, and an electron transfer chain that converts photonic excitation into a charge separation. This is Cytochrome b559 subunit beta from Nostoc sp. (strain PCC 7120 / SAG 25.82 / UTEX 2576).